Reading from the N-terminus, the 590-residue chain is G protein-coupled receptor kinase 5 (590 aa).

The N-terminal stretch occupies residues Met-1–Thr-185. An interaction with calmodulin region spans residues Gly-20 to Ile-39. The RGS domain occupies Tyr-53–Leu-171. A Protein kinase domain is found at Phe-186 to Phe-448. ATP contacts are provided by residues Leu-192–Val-200 and Lys-215. The active-site Proton acceptor is the Asp-311. The Nuclear localization signal motif lies at Arg-388 to Glu-395. Residues Arg-449–Glu-514 form the AGC-kinase C-terminal domain. The residue at position 484 (Ser-484) is a Phosphoserine; by autocatalysis. At Thr-485 the chain carries Phosphothreonine; by autocatalysis. The interval Pro-546 to Ser-565 is sufficient for membrane localization. The interval Leu-554–Ser-590 is disordered. The segment covering Asn-561 to Ser-590 has biased composition (low complexity). A Phosphoserine modification is found at Ser-579.

The protein belongs to the protein kinase superfamily. AGC Ser/Thr protein kinase family. GPRK subfamily. As to quaternary structure, interacts with ST13 (via the C-terminus 303-319 AA). Interacts with TP53/p53. Interacts with HTR4 (via C-terminus 330-346 AA); this interaction is promoted by 5-HT (serotonin). Interacts with HDAC5. Interacts with GIT1. In terms of processing, autophosphorylated. Autophosphorylation may play a critical role in the regulation of GRK5 kinase activity. As to expression, highest levels in lung, heart, retina, lingual epithelium. Very little in brain, liver, kidney.

The protein resides in the cytoplasm. Its subcellular location is the nucleus. It is found in the cell membrane. The catalysed reaction is [G-protein-coupled receptor] + ATP = [G-protein-coupled receptor]-phosphate + ADP + H(+). Its activity is regulated as follows. Inhibited by calmodulin with an IC(50) of 50 nM. Calmodulin inhibits GRK5 association with receptor and phospholipid. In terms of biological role, serine/threonine kinase that phosphorylates preferentially the activated forms of a variety of G-protein-coupled receptors (GPCRs). Such receptor phosphorylation initiates beta-arrestin-mediated receptor desensitization, internalization, and signaling events leading to their down-regulation. Phosphorylates a variety of GPCRs, including adrenergic receptors (Beta-2 adrenergic receptor), muscarinic acetylcholine receptors (more specifically Gi-coupled M2/M4 subtypes), dopamine receptors and opioid receptors. In addition to GPCRs, also phosphorylates various substrates: Hsc70-interacting protein/ST13, TP53/p53, HDAC5, and arrestin-1/ARRB1. Phosphorylation of ARRB1 by GRK5 inhibits G-protein independent MAPK1/MAPK3 signaling downstream of 5HT4-receptors. Phosphorylation of HDAC5, a repressor of myocyte enhancer factor 2 (MEF2) leading to nuclear export of HDAC5 and allowing MEF2-mediated transcription. Phosphorylation of TP53/p53, a crucial tumor suppressor, inhibits TP53/p53-mediated apoptosis. Phosphorylation of ST13 regulates internalization of the chemokine receptor. Phosphorylates rhodopsin (RHO) (in vitro) and a non G-protein-coupled receptor, LRP6 during Wnt signaling (in vitro). This Bos taurus (Bovine) protein is G protein-coupled receptor kinase 5 (GRK5).